A 32-amino-acid polypeptide reads, in one-letter code: Cytochrome b6-f complex subunit 7 (32 aa).

The helical transmembrane segment at 9-27 threads the bilayer; sequence AAVFWVLIPVGLLGGAILL.

The protein belongs to the PetM family. The 4 large subunits of the cytochrome b6-f complex are cytochrome b6, subunit IV (17 kDa polypeptide, PetD), cytochrome f and the Rieske protein, while the 4 small subunits are PetG, PetL, PetM and PetN. The complex functions as a dimer.

The protein resides in the cellular thylakoid membrane. Functionally, component of the cytochrome b6-f complex, which mediates electron transfer between photosystem II (PSII) and photosystem I (PSI), cyclic electron flow around PSI, and state transitions. In Prochlorococcus marinus (strain MIT 9211), this protein is Cytochrome b6-f complex subunit 7.